We begin with the raw amino-acid sequence, 517 residues long: Lysine--tRNA ligase (517 aa).

Positions 1–21 (MTEPNRAQAPAQNKAAADTPA) are disordered. Residues 7-20 (AQAPAQNKAAADTP) are compositionally biased toward low complexity. Residues Glu-427 and Glu-434 each contribute to the Mg(2+) site.

It belongs to the class-II aminoacyl-tRNA synthetase family. As to quaternary structure, homodimer. It depends on Mg(2+) as a cofactor.

Its subcellular location is the cytoplasm. It catalyses the reaction tRNA(Lys) + L-lysine + ATP = L-lysyl-tRNA(Lys) + AMP + diphosphate. This is Lysine--tRNA ligase from Cupriavidus taiwanensis (strain DSM 17343 / BCRC 17206 / CCUG 44338 / CIP 107171 / LMG 19424 / R1) (Ralstonia taiwanensis (strain LMG 19424)).